The following is a 168-amino-acid chain: ATP synthase subunit d, mitochondrial (168 aa).

The protein belongs to the ATPase d subunit family. In terms of assembly, F-type ATPases have 2 components, CF(1) - the catalytic core - and CF(0) - the membrane proton channel. CF(0) seems to have nine subunits: a, b, c, d, e, f, g, F6 and 8 (or A6L).

It localises to the mitochondrion. The protein resides in the mitochondrion inner membrane. Its function is as follows. Mitochondrial membrane ATP synthase (F(1)F(0) ATP synthase or Complex V) produces ATP from ADP in the presence of a proton gradient across the membrane which is generated by electron transport complexes of the respiratory chain. F-type ATPases consist of two structural domains, F(1) - containing the extramembraneous catalytic core, and F(0) - containing the membrane proton channel, linked together by a central stalk and a peripheral stalk. During catalysis, ATP synthesis in the catalytic domain of F(1) is coupled via a rotary mechanism of the central stalk subunits to proton translocation. Part of the complex F(0) domain and the peripheric stalk, which acts as a stator to hold the catalytic alpha(3)beta(3) subcomplex and subunit a/ATP6 static relative to the rotary elements. This chain is ATP synthase subunit d, mitochondrial, found in Arabidopsis thaliana (Mouse-ear cress).